Here is a 440-residue protein sequence, read N- to C-terminus: Xylose isomerase (440 aa).

Residues H100 and D103 contribute to the active site. Positions 231, 267, 270, 295, 306, 308, and 338 each coordinate Mg(2+).

This sequence belongs to the xylose isomerase family. In terms of assembly, homotetramer. It depends on Mg(2+) as a cofactor.

The protein localises to the cytoplasm. It catalyses the reaction alpha-D-xylose = alpha-D-xylulofuranose. This chain is Xylose isomerase, found in Burkholderia multivorans (strain ATCC 17616 / 249).